The primary structure comprises 166 residues: Protein-export protein SecB (166 aa).

The protein belongs to the SecB family. In terms of assembly, homotetramer, a dimer of dimers. One homotetramer interacts with 1 SecA dimer.

It is found in the cytoplasm. One of the proteins required for the normal export of preproteins out of the cell cytoplasm. It is a molecular chaperone that binds to a subset of precursor proteins, maintaining them in a translocation-competent state. It also specifically binds to its receptor SecA. The polypeptide is Protein-export protein SecB (Sinorhizobium fredii (strain NBRC 101917 / NGR234)).